Here is a 265-residue protein sequence, read N- to C-terminus: MSRLEAAVNGKKNLFIPFITAGDPNPEVTIELALTLEEAGADILELGIPYSDPLADGPVIQAASKRALKHEMTLEKALSLVPKMRAQGLTIPVIVFTYVNPLLQYGEEQFVKRAADYQVDGILVPDMPFEEGEVLQAACQEHNLSLISLVAPTSNKRIEKIAARAQGFVYCVSSLGVTGLRDELDPRVHEFLQTVKTHASVPVVVGFGISRREQVEALAENADGVVVGSAIVKLVGELEDELNDPEKLEDGLFKIKRFVSELISS.

Residues E45 and D56 each act as proton acceptor in the active site.

This sequence belongs to the TrpA family. Tetramer of two alpha and two beta chains.

The catalysed reaction is (1S,2R)-1-C-(indol-3-yl)glycerol 3-phosphate + L-serine = D-glyceraldehyde 3-phosphate + L-tryptophan + H2O. It functions in the pathway amino-acid biosynthesis; L-tryptophan biosynthesis; L-tryptophan from chorismate: step 5/5. In terms of biological role, the alpha subunit is responsible for the aldol cleavage of indoleglycerol phosphate to indole and glyceraldehyde 3-phosphate. This is Tryptophan synthase alpha chain from Halalkalibacterium halodurans (strain ATCC BAA-125 / DSM 18197 / FERM 7344 / JCM 9153 / C-125) (Bacillus halodurans).